We begin with the raw amino-acid sequence, 514 residues long: FAD-dependent monooxygenase CPUR_05423 (514 aa).

2 residues coordinate FAD: Val-79 and Arg-146. Residue Arg-227 is part of the active site. Positions 358 and 371 each coordinate FAD.

Belongs to the paxM FAD-dependent monooxygenase family. It depends on FAD as a cofactor.

It functions in the pathway pigment biosynthesis. In terms of biological role, FAD-dependent monooxygenase; part of the ergochrome gene cluster responsible for the typical purple-black color of the ergot sclerotia. The ergochrome gene cluster produces several ergot pigments including the yellow ergochrome secalonic acid and its derivatives, as well as the red anthraquinones endocrocin and clavorubin. The pathway begins with the synthesis of atrochrysone thioester by the polyketide synthase (PKS) CPUR_05437. The atrochrysone carboxyl ACP thioesterase CPUR_05436 then breaks the thioester bond and releases the atrochrysone carboxylic acid from CPUR_05437. The atrochrysone carboxylic acid is then converted to atrochrysone which is further transformed into emodin anthrone. The next step is performed by the anthrone oxygenase CPUR_05434 that catalyzes the oxidation of emodinanthrone to emodin. Emodin is further modified to yield monodictyphenone via several steps involving CPUR_05427, CPUR_05428, CPUR_05429 and CPUR_05430. The short chain dehydrogenase/reductase CPUR_05418 then catalyzes the C-5 ketoreduction to give the xanthone skeleton of the monomeric units. Ergochromes formation requires further dimerization steps of different xanthone units, probably catalyzed by the cytochrome P450 monooxygenase CPUR_05419. CPUR_05425, CPUR_05426 and CPUR_05431 are unique to Claviceps, thus it is likely that they are involved in further modification of xanthone units or in their dimerization. The yellow ergochromes and the red anthraquinone pigments endocrocin and clavorubin are products from the same PKS derived precursors and the latter are likely shunt products in the pathway of xanthone biosynthesis. It is proposed that atrochrysone carboxylic acid released from the PKS CPUR_05437 can also be converted to endocrocin anthrone which is further oxidized into endocrocin by CPUR_05435. Endocrocin could be then modified to clavorubin, possibly by CPUR_05423 and CPUR_05431. Clavorubin is the principal anthraquinone metabolite produced by the cluster with a much higher yield compared to endocrocin. This chain is FAD-dependent monooxygenase CPUR_05423, found in Claviceps purpurea (strain 20.1) (Ergot fungus).